Consider the following 407-residue polypeptide: uncharacterized protein (407 aa).

Lys22 is covalently cross-linked (Glycyl lysine isopeptide (Lys-Gly) (interchain with G-Cter in ubiquitin)).

The protein belongs to the SVF1 family.

The protein localises to the cytoplasm. This is an uncharacterized protein from Saccharomyces cerevisiae (strain ATCC 204508 / S288c) (Baker's yeast).